We begin with the raw amino-acid sequence, 121 residues long: Protein TusC (121 aa).

This sequence belongs to the DsrF/TusC family. Heterohexamer, formed by a dimer of trimers. The hexameric TusBCD complex contains 2 copies each of TusB, TusC and TusD. The TusBCD complex interacts with TusE.

Its subcellular location is the cytoplasm. Part of a sulfur-relay system required for 2-thiolation of 5-methylaminomethyl-2-thiouridine (mnm(5)s(2)U) at tRNA wobble positions. The polypeptide is Protein TusC (Yersinia enterocolitica serotype O:8 / biotype 1B (strain NCTC 13174 / 8081)).